We begin with the raw amino-acid sequence, 280 residues long: Phosphonoacetaldehyde hydrolase (280 aa).

The Nucleophile role is filled by D20. The Mg(2+) site is built by D20 and A22. The Schiff-base intermediate with substrate role is filled by K61. D194 serves as a coordination point for Mg(2+).

It belongs to the HAD-like hydrolase superfamily. PhnX family. As to quaternary structure, homodimer. The cofactor is Mg(2+).

The enzyme catalyses phosphonoacetaldehyde + H2O = acetaldehyde + phosphate + H(+). Involved in phosphonate degradation. This chain is Phosphonoacetaldehyde hydrolase, found in Nitratidesulfovibrio vulgaris (strain DSM 19637 / Miyazaki F) (Desulfovibrio vulgaris).